Reading from the N-terminus, the 64-residue chain is Alpha-mammal toxin AnCra1 (64 aa).

Residues 2 to 64 enclose the LCN-type CS-alpha/beta domain; that stretch reads KDGYIVDDVN…VRTKGPGRCN (63 aa). 4 disulfides stabilise this stretch: C12–C63, C16–C36, C22–C46, and C26–C48.

This sequence belongs to the long (4 C-C) scorpion toxin superfamily. Sodium channel inhibitor family. Alpha subfamily. In terms of tissue distribution, expressed by the venom gland.

The protein localises to the secreted. Its function is as follows. Alpha toxins bind voltage-independently at site-3 of sodium channels (Nav) and inhibit the inactivation of the activated channels, thereby blocking neuronal transmission. This toxin is active against mammals. The recombinant toxin selectively inhibits the fast inactivation of hNav1.7/SCN9A channel (EC(50)=136.7 nM). Is potent in inhibiting the fast inactivation of hNav1.7 and has little effect on the steady-state inactivation. In vivo, intravenous injection into mice induces muscle contraction, leading to severe paralysis and death. This chain is Alpha-mammal toxin AnCra1, found in Androctonus crassicauda (Arabian fat-tailed scorpion).